A 514-amino-acid chain; its full sequence is Pantetheinase (514 aa).

An N-terminal signal peptide occupies residues 1 to 22; the sequence is MITSRLLVYVAVLVLCVIKVSS. N-linked (GlcNAc...) asparagine glycosylation occurs at Asn-39. Residues 40–307 enclose the CN hydrolase domain; sequence ATLVPVSHEE…GKLLLSQLDS (268 aa). The active-site Proton acceptor is Glu-80. N-linked (GlcNAc...) asparagine glycosylation is found at Asn-87 and Asn-147. Lys-179 functions as the Proton donor in the catalytic mechanism. The active-site Nucleophile is Cys-212. Asn-316 and Asn-354 each carry an N-linked (GlcNAc...) asparagine glycan. Asp-492 carries GPI-anchor amidated aspartate lipidation. Residues 493-514 constitute a propeptide, removed in mature form; the sequence is PRSQVPGVMLLVIIPIVCSLSW.

The protein belongs to the carbon-nitrogen hydrolase superfamily. BTD/VNN family. As to quaternary structure, monomer.

It localises to the cell membrane. The enzyme catalyses (R)-pantetheine + H2O = cysteamine + (R)-pantothenate. In terms of biological role, amidohydrolase that hydrolyzes specifically one of the carboamide linkages in D-pantetheine thus recycling pantothenic acid (vitamin B5) and releasing cysteamine. The protein is Pantetheinase (VNN1) of Canis lupus familiaris (Dog).